A 99-amino-acid chain; its full sequence is Beta-2-microglobulin (99 aa).

The Ig-like C1-type domain occupies 5-93 (PRVQVYSRHP…HITLSEPKIV (89 aa)). The cysteines at positions 25 and 80 are disulfide-linked.

The protein belongs to the beta-2-microglobulin family. Heterodimer of an alpha chain and a beta chain. Beta-2-microglobulin is the beta-chain of major histocompatibility complex class I molecules.

Its subcellular location is the secreted. Functionally, component of the class I major histocompatibility complex (MHC). Involved in the presentation of peptide antigens to the immune system. The protein is Beta-2-microglobulin (B2M) of Cavia porcellus (Guinea pig).